The chain runs to 406 residues: Argininosuccinate synthase (406 aa).

ATP contacts are provided by residues 14–22 (AYSGGLDTS) and alanine 41. L-citrulline is bound by residues tyrosine 92 and serine 97. An ATP-binding site is contributed by glycine 122. The L-aspartate site is built by threonine 124, asparagine 128, and aspartate 129. Asparagine 128 contacts L-citrulline. The L-citrulline site is built by arginine 132, serine 181, serine 190, glutamate 266, and tyrosine 278.

It belongs to the argininosuccinate synthase family. Type 1 subfamily. In terms of assembly, homotetramer.

It is found in the cytoplasm. It catalyses the reaction L-citrulline + L-aspartate + ATP = 2-(N(omega)-L-arginino)succinate + AMP + diphosphate + H(+). The protein operates within amino-acid biosynthesis; L-arginine biosynthesis; L-arginine from L-ornithine and carbamoyl phosphate: step 2/3. The protein is Argininosuccinate synthase of Geobacter sulfurreducens (strain ATCC 51573 / DSM 12127 / PCA).